A 355-amino-acid polypeptide reads, in one-letter code: Methylxanthine N3-demethylase NdmB (355 aa).

Residues 19-131 (WHPVCTLNEF…CEVKYDIVWV (113 aa)) form the Rieske domain. The [2Fe-2S] cluster site is built by Cys-64, His-66, Cys-87, and His-90.

[2Fe-2S] cluster is required as a cofactor.

The catalysed reaction is theobromine + NADH + O2 + H(+) = 7-methylxanthine + formaldehyde + NAD(+) + H2O. The enzyme catalyses theobromine + NADPH + O2 + H(+) = 7-methylxanthine + formaldehyde + NADP(+) + H2O. It catalyses the reaction 3-methylxanthine + NADH + O2 + H(+) = xanthine + formaldehyde + NAD(+) + H2O. It carries out the reaction 3-methylxanthine + NADPH + O2 + H(+) = xanthine + formaldehyde + NADP(+) + H2O. Involved in the caffeine degradation, which is the essential first step for assimilating the carbon and nitrogen in caffeine. Catalyzes the N3-demethylation of theobromine to produce 7-methylxanthine and formaldehyde. Also catalyzes the N3-demethylation of 3-methylxanthine, caffeine, and theophylline to xanthine, paraxanthine, and 1-methylxanthine, respectively. NADH is the preferred substrate. This is Methylxanthine N3-demethylase NdmB (ndmB) from Pseudomonas putida (Arthrobacter siderocapsulatus).